We begin with the raw amino-acid sequence, 262 residues long: Elongator complex protein 5 (262 aa).

Disordered stretches follow at residues 181–214 and 229–262; these read TPLD…FKIE and PYER…DLCI. The segment covering 200 to 211 has biased composition (polar residues); the sequence is AEQTTEPASSTF. Residues 246–262 show a composition bias toward acidic residues; sequence DADDDFDEEDPDEDLCI.

The protein belongs to the ELP5 family. In terms of assembly, component of the elongator complex composed of Elp1, Elp2, Elp3, Elp4, Elp5 and Elp6. The elongator complex associates with and stabilizes microtubules; efficient interaction requires the full complex.

The protein localises to the cytoplasm. It is found in the nucleus. The protein resides in the cytoskeleton. It localises to the spindle. The protein operates within tRNA modification; 5-methoxycarbonylmethyl-2-thiouridine-tRNA biosynthesis. Component of the elongator complex, which is required for multiple tRNA modifications, including mcm5U (5-methoxycarbonylmethyl uridine), mcm5s2U (5-methoxycarbonylmethyl-2-thiouridine), and ncm5U (5-carbamoylmethyl uridine). The elongator complex catalyzes the formation of carboxymethyluridine in the wobble base at position 34 in tRNAs. Binding by the elongator complex stabilizes microtubules and promotes their growth. This induces central spindle asymmetry, promoting polarized signaling endosome trafficking during asymmetric cell division and cell fate assignation of sensory organ precursor cells. The protein is Elongator complex protein 5 of Drosophila melanogaster (Fruit fly).